Here is a 278-residue protein sequence, read N- to C-terminus: MQAAQGEGWHDAQLDFSKSMSYGDYLALDQILNAQHPRSPDHNEMLFIVQHQTTELWMKLMLHELRAARDCVRNDNLPPAFKMLARVSRIMDQLVQAWNVLATMTPPEYSAMRPHLGQSSGFQSYQYREIEFILGNKNAAMLKPHAHRTEHYEQVKAALETPSLYDEAVRYMARHGFAFDADCIERDWSRPVTYNASVEAAWLEVYRDPTHHWELYELAEKFVDLEDAFRQWRFRHVTTVERVIGFKRGTGGTEGVGYLRKMLDVVLFPELWKLRTDL.

Residues 47–51 (FIVQH), Tyr109, and Arg113 contribute to the substrate site. His236 contacts heme. Thr250 provides a ligand contact to substrate.

The protein belongs to the tryptophan 2,3-dioxygenase family. Homotetramer. Requires heme as cofactor.

The catalysed reaction is L-tryptophan + O2 = N-formyl-L-kynurenine. It functions in the pathway amino-acid degradation; L-tryptophan degradation via kynurenine pathway; L-kynurenine from L-tryptophan: step 1/2. Functionally, heme-dependent dioxygenase that catalyzes the oxidative cleavage of the L-tryptophan (L-Trp) pyrrole ring and converts L-tryptophan to N-formyl-L-kynurenine. Catalyzes the oxidative cleavage of the indole moiety. The chain is Tryptophan 2,3-dioxygenase from Ralstonia pickettii (strain 12J).